Here is a 254-residue protein sequence, read N- to C-terminus: Alcohol dehydrogenase 2 (254 aa).

Position 10 to 33 (10 to 33) interacts with NAD(+); the sequence is FVAGLGGIGFDTSREIVKSGPKNL. Residue Ser-138 participates in substrate binding. Tyr-151 acts as the Proton acceptor in catalysis.

Belongs to the short-chain dehydrogenases/reductases (SDR) family. Homodimer.

It catalyses the reaction a primary alcohol + NAD(+) = an aldehyde + NADH + H(+). It carries out the reaction a secondary alcohol + NAD(+) = a ketone + NADH + H(+). The chain is Alcohol dehydrogenase 2 (Adh2) from Drosophila wheeleri (Fruit fly).